A 139-amino-acid chain; its full sequence is NADPH-dependent 7-cyano-7-deazaguanine reductase (139 aa).

Cys-34 acts as the Thioimide intermediate in catalysis. Residue Asp-41 is the Proton donor of the active site. Substrate contacts are provided by residues 56–58 (IEL) and 75–76 (HE).

Belongs to the GTP cyclohydrolase I family. QueF type 1 subfamily.

Its subcellular location is the cytoplasm. It catalyses the reaction 7-aminomethyl-7-carbaguanine + 2 NADP(+) = 7-cyano-7-deazaguanine + 2 NADPH + 3 H(+). The protein operates within tRNA modification; tRNA-queuosine biosynthesis. In terms of biological role, catalyzes the NADPH-dependent reduction of 7-cyano-7-deazaguanine (preQ0) to 7-aminomethyl-7-deazaguanine (preQ1). The protein is NADPH-dependent 7-cyano-7-deazaguanine reductase of Nitrosomonas europaea (strain ATCC 19718 / CIP 103999 / KCTC 2705 / NBRC 14298).